A 434-amino-acid chain; its full sequence is Eukaryotic translation initiation factor 3 subunit E (434 aa).

Positions 219 to 392 constitute a PCI domain; sequence FFNHPKGRDL…GHVVMGTQPL (174 aa).

Belongs to the eIF-3 subunit E family. In terms of assembly, component of the eukaryotic translation initiation factor 3 (eIF-3) complex. The eIF-3 complex interacts with pix. Interacts with mxt.

It is found in the cytoplasm. Component of the eukaryotic translation initiation factor 3 (eIF-3) complex, which is involved in protein synthesis of a specialized repertoire of mRNAs and, together with other initiation factors, stimulates binding of mRNA and methionyl-tRNAi to the 40S ribosome. The eIF-3 complex specifically targets and initiates translation of a subset of mRNAs involved in cell proliferation. The sequence is that of Eukaryotic translation initiation factor 3 subunit E (eIF3-S6) from Drosophila persimilis (Fruit fly).